The primary structure comprises 661 residues: 72 kDa type IV collagenase (661 aa).

Residues 1-30 form the signal peptide; that stretch reads MTEARVSRGALAALLRALCALGCLLGRAAA. The propeptide at 31 to 110 is activation peptide; sequence APSPIIKFPG…PRCGNPDVAN (80 aa). The Cysteine switch motif lies at 101–108; the sequence is PRCGNPDV. Position 103 (cysteine 103) interacts with Zn(2+). Residues 111–222 are collagenase-like 1; sequence YNFFPRKPKW…LRTLGEGQVV (112 aa). 2 residues coordinate Ca(2+): aspartate 135 and aspartate 169. Residues histidine 179 and aspartate 181 each coordinate Zn(2+). Aspartate 186 and glycine 187 together coordinate Ca(2+). Histidine 194 provides a ligand contact to Zn(2+). Ca(2+) is bound by residues glycine 201, glycine 203, and aspartate 205. Histidine 207 provides a ligand contact to Zn(2+). Ca(2+)-binding residues include aspartate 209, aspartate 210, and glutamate 212. Positions 223–397 are collagen-binding; it reads RVKYGNADGE…WGFCPDQGYS (175 aa). Fibronectin type-II domains follow at residues 229–277, 287–335, and 345–393; these read ADGE…FCPH, ADGQ…FCPE, and SEGA…FCPD. Intrachain disulfides connect cysteine 234-cysteine 260, cysteine 248-cysteine 275, cysteine 292-cysteine 318, cysteine 306-cysteine 333, cysteine 350-cysteine 376, and cysteine 364-cysteine 391. The segment at 398–466 is collagenase-like 2; it reads LFLVAAHEFG…GPTPTLGPVT (69 aa). Histidine 404 lines the Zn(2+) pocket. Residue glutamate 405 is part of the active site. Histidine 408 and histidine 414 together coordinate Zn(2+). The tract at residues 415–661 is required for inhibitor TIMP2 binding; that stretch reads SQDPGALMAP…GSIKSDWLGC (247 aa). Hemopexin repeat units lie at residues 469–517, 518–564, 566–614, and 615–661; these read LCKQ…WPEL, PEKI…GLPP, VQKV…WNAI, and PDNL…WLGC. A disulfide bond links cysteine 470 and cysteine 661. Positions 477, 522, and 570 each coordinate Ca(2+). Asparagine 574 carries N-linked (GlcNAc...) asparagine glycosylation. Aspartate 619 provides a ligand contact to Ca(2+). An N-linked (GlcNAc...) asparagine glycan is attached at asparagine 643.

Belongs to the peptidase M10A family. Interacts (via the C-terminal hemopexin-like domains-containing region) with the integrin alpha-V/beta-3; the interaction promotes vascular invasion in angiogenic vessels and melamoma cells. Interacts (via the C-terminal PEX domain) with TIMP2 (via the C-terminal); the interaction inhibits the degradation activity. Interacts with GSK3B. Requires Ca(2+) as cofactor. The cofactor is Zn(2+). Phosphorylation on multiple sites modulates enzymatic activity. Phosphorylated by PKC in vitro. Post-translationally, the propeptide is processed by MMP14 (MT-MMP1) and MMP16 (MT-MMP3). Autocatalytic cleavage in the C-terminal produces the anti-angiogenic peptide, PEX. This processing appears to be facilitated by binding integrinv/beta3.

It is found in the secreted. It localises to the extracellular space. The protein localises to the extracellular matrix. The protein resides in the membrane. Its subcellular location is the nucleus. It catalyses the reaction Cleavage of gelatin type I and collagen types IV, V, VII, X. Cleaves the collagen-like sequence Pro-Gln-Gly-|-Ile-Ala-Gly-Gln.. Functionally, ubiquitinous metalloproteinase that is involved in diverse functions such as remodeling of the vasculature, angiogenesis, tissue repair, tumor invasion, inflammation, and atherosclerotic plaque rupture. As well as degrading extracellular matrix proteins, can also act on several nonmatrix proteins such as big endothelial 1 and beta-type CGRP promoting vasoconstriction. Also cleaves KISS at a Gly-|-Leu bond. Appears to have a role in myocardial cell death pathways. Contributes to myocardial oxidative stress by regulating the activity of GSK3beta. Cleaves GSK3beta in vitro. Involved in the formation of the fibrovascular tissues. In terms of biological role, PEX, the C-terminal non-catalytic fragment of MMP2, possesses anti-angiogenic and anti-tumor properties and inhibits cell migration and cell adhesion to FGF2 and vitronectin. Ligand for integrin alpha-v/beta-3 on the surface of blood vessels. This chain is 72 kDa type IV collagenase (MMP2), found in Bos taurus (Bovine).